Consider the following 132-residue polypeptide: Mercuric resistance operon regulatory protein (132 aa).

The region spanning Lys2 to Val71 is the HTH merR-type domain. A DNA-binding region (H-T-H motif) is located at residues Ile5–Arg24. Positions 79, 114, and 123 each coordinate Hg(2+).

Homodimer.

In terms of biological role, mediates the mercuric-dependent induction of mercury resistance operon. In the absence of mercury MerR represses transcription by binding tightly to the mer operator region; when mercury is present the dimeric complex binds a single ion and becomes a potent transcriptional activator, while remaining bound to the mer site. This Bacillus cereus protein is Mercuric resistance operon regulatory protein (merR1).